A 302-amino-acid polypeptide reads, in one-letter code: Sulfotransferase 1C4 (302 aa).

Residue 55 to 60 participates in 3'-phosphoadenylyl sulfate binding; the sequence is KAGTTW. 113–115 contacts substrate; sequence KTH. The Proton acceptor role is filled by H115. Residues R137, S145, Y200, 234–239, and 262–266 each bind 3'-phosphoadenylyl sulfate; these read TSFDVM and FMRKG.

The protein belongs to the sulfotransferase 1 family. In terms of tissue distribution, expressed at high levels in fetal lung and kidney and at low levels in fetal heart, adult kidney, ovary and spinal cord.

It localises to the cytoplasm. The protein resides in the cytosol. The enzyme catalyses a phenol + 3'-phosphoadenylyl sulfate = an aryl sulfate + adenosine 3',5'-bisphosphate + H(+). It catalyses the reaction 17beta-estradiol + 3'-phosphoadenylyl sulfate = 17beta-estradiol 3-sulfate + adenosine 3',5'-bisphosphate + H(+). It carries out the reaction bisphenol A + 3'-phosphoadenylyl sulfate = bisphenyl A sulfate + adenosine 3',5'-bisphosphate + H(+). Its function is as follows. Sulfotransferase that utilizes 3'-phospho-5'-adenylyl sulfate (PAPS) as sulfonate donor to catalyze the sulfate conjugation of phenolic compounds. Can also sulfonate estrogenic compounds, however, the dietary flavonoids (phytoestrogen) and environmental estrogens, like bisphenol A are better substrates than 17beta-estradiol (E2). Mediates the sulfation of doxorubicin and its analog epirubicin, two antitumor anthracyclines. This is Sulfotransferase 1C4 from Homo sapiens (Human).